We begin with the raw amino-acid sequence, 968 residues long: Isoleucine--tRNA ligase (968 aa).

Positions 68–78 (PYANGALHMGH) match the 'HIGH' region motif. Glutamate 582 contacts L-isoleucyl-5'-AMP. The 'KMSKS' region signature appears at 623 to 627 (KMSKS). Residue lysine 626 coordinates ATP. 4 residues coordinate Zn(2+): cysteine 936, cysteine 939, cysteine 956, and cysteine 959.

The protein belongs to the class-I aminoacyl-tRNA synthetase family. IleS type 1 subfamily. Monomer. It depends on Zn(2+) as a cofactor.

The protein localises to the cytoplasm. The enzyme catalyses tRNA(Ile) + L-isoleucine + ATP = L-isoleucyl-tRNA(Ile) + AMP + diphosphate. Catalyzes the attachment of isoleucine to tRNA(Ile). As IleRS can inadvertently accommodate and process structurally similar amino acids such as valine, to avoid such errors it has two additional distinct tRNA(Ile)-dependent editing activities. One activity is designated as 'pretransfer' editing and involves the hydrolysis of activated Val-AMP. The other activity is designated 'posttransfer' editing and involves deacylation of mischarged Val-tRNA(Ile). In Prochlorococcus marinus (strain MIT 9312), this protein is Isoleucine--tRNA ligase.